The following is a 142-amino-acid chain: Cytidine deaminase (142 aa).

One can recognise a CMP/dCMP-type deaminase domain in the interval 9 to 139; the sequence is RQLEALKRAA…ELLPMAFGPS (131 aa). 50-52 provides a ligand contact to substrate; sequence NVE. C61 lines the Zn(2+) pocket. E63 functions as the Proton donor in the catalytic mechanism. C96 and C99 together coordinate Zn(2+).

It belongs to the cytidine and deoxycytidylate deaminase family. As to quaternary structure, homodimer. Zn(2+) serves as cofactor.

It catalyses the reaction cytidine + H2O + H(+) = uridine + NH4(+). The catalysed reaction is 2'-deoxycytidine + H2O + H(+) = 2'-deoxyuridine + NH4(+). This enzyme scavenges exogenous and endogenous cytidine and 2'-deoxycytidine for UMP synthesis. The sequence is that of Cytidine deaminase (CDD1) from Saccharomyces cerevisiae (strain ATCC 204508 / S288c) (Baker's yeast).